A 382-amino-acid chain; its full sequence is MKALHFGAGNIGRGFIGKLLADSGMQVIFADVNDSVIDLLKSRRSYGVKIVGDSINTVERVTQVTGVNSKDETAIITLFNEVDLVTTAVGPNVLKIVASTFAKALEARIAGGNTKPLNIIACENMVRGTSFLKEQVFTHLNPDYKDKVEQLIGFVDSAVDRIVPPVKPDAEDPLLVTVEEFSEWIVDQTQFKGAIPDIKGMELTDNLMAFVERKLFTLNTGHAVTSYYGKFKGYKFVKESIEDESVKAFVKSVMQESGAVLIKRYGFDPQAHAAYIEKILKRFANPYLVDDVDRVGREPLRKLSYNDRLIKPLRGTIEYGLPNDNLIRAIATALSYRNENDPQALELAKSLAEAGVTQTIKKYTELQDENVIARIAKAYETL.

3-14 is an NAD(+) binding site; that stretch reads ALHFGAGNIGRG.

It belongs to the mannitol dehydrogenase family.

It catalyses the reaction D-mannitol 1-phosphate + NAD(+) = beta-D-fructose 6-phosphate + NADH + H(+). In Mannheimia succiniciproducens (strain KCTC 0769BP / MBEL55E), this protein is Mannitol-1-phosphate 5-dehydrogenase.